A 198-amino-acid chain; its full sequence is Na(+)-translocating NADH-quinone reductase subunit E (198 aa).

6 helical membrane-spanning segments follow: residues 11 to 31 (SIFI…FLAV), 39 to 59 (FGLG…NNLV), 77 to 97 (FLSF…LEMI), 110 to 130 (GIFL…SFMV), 140 to 160 (VVYG…LAGI), and 176 to 196 (LGIT…FSGV).

The protein belongs to the NqrDE/RnfAE family. In terms of assembly, composed of six subunits; NqrA, NqrB, NqrC, NqrD, NqrE and NqrF.

The protein localises to the cell inner membrane. It carries out the reaction a ubiquinone + n Na(+)(in) + NADH + H(+) = a ubiquinol + n Na(+)(out) + NAD(+). In terms of biological role, NQR complex catalyzes the reduction of ubiquinone-1 to ubiquinol by two successive reactions, coupled with the transport of Na(+) ions from the cytoplasm to the periplasm. NqrA to NqrE are probably involved in the second step, the conversion of ubisemiquinone to ubiquinol. This Aliivibrio fischeri (strain ATCC 700601 / ES114) (Vibrio fischeri) protein is Na(+)-translocating NADH-quinone reductase subunit E.